A 252-amino-acid polypeptide reads, in one-letter code: uncharacterized protein (252 aa).

Phosphoserine is present on residues S195 and S209.

Testis-specific. Highly expressed in spermatocytes (at protein level).

Essential for normal spermatogenesis and male fertility. This is an uncharacterized protein from Mus musculus (Mouse).